The following is an 88-amino-acid chain: Small ribosomal subunit protein bS16 (88 aa).

Belongs to the bacterial ribosomal protein bS16 family.

This is Small ribosomal subunit protein bS16 from Mycoplasma pneumoniae (strain ATCC 29342 / M129 / Subtype 1) (Mycoplasmoides pneumoniae).